A 235-amino-acid chain; its full sequence is Glycerol-3-phosphate acyltransferase (235 aa).

6 helical membrane-spanning segments follow: residues 2 to 22 (FTLI…TSII), 56 to 76 (TVTI…VVFF), 94 to 114 (LIAG…GFKG), 126 to 146 (FGIA…VVFL), 152 to 172 (VASI…KYLF), and 190 to 210 (FIHD…AAAI).

Belongs to the PlsY family. In terms of assembly, probably interacts with PlsX.

It localises to the cell inner membrane. It catalyses the reaction an acyl phosphate + sn-glycerol 3-phosphate = a 1-acyl-sn-glycero-3-phosphate + phosphate. It participates in lipid metabolism; phospholipid metabolism. In terms of biological role, catalyzes the transfer of an acyl group from acyl-phosphate (acyl-PO(4)) to glycerol-3-phosphate (G3P) to form lysophosphatidic acid (LPA). This enzyme utilizes acyl-phosphate as fatty acyl donor, but not acyl-CoA or acyl-ACP. The protein is Glycerol-3-phosphate acyltransferase of Chlorobium phaeobacteroides (strain BS1).